A 77-amino-acid polypeptide reads, in one-letter code: U8-lycotoxin-Ls1b (77 aa).

The first 20 residues, methionine 1–alanine 20, serve as a signal peptide directing secretion. A propeptide spanning residues glutamine 21–lysine 26 is cleaved from the precursor.

Belongs to the neurotoxin 19 (CSTX) family. 08 (U8-Lctx) subfamily. Contains 4 disulfide bonds. As to expression, expressed by the venom gland.

The protein resides in the secreted. This chain is U8-lycotoxin-Ls1b, found in Lycosa singoriensis (Wolf spider).